The primary structure comprises 188 residues: Elongation factor P (188 aa).

Belongs to the elongation factor P family.

It localises to the cytoplasm. It functions in the pathway protein biosynthesis; polypeptide chain elongation. Involved in peptide bond synthesis. Stimulates efficient translation and peptide-bond synthesis on native or reconstituted 70S ribosomes in vitro. Probably functions indirectly by altering the affinity of the ribosome for aminoacyl-tRNA, thus increasing their reactivity as acceptors for peptidyl transferase. In Malacoplasma penetrans (strain HF-2) (Mycoplasma penetrans), this protein is Elongation factor P.